Consider the following 649-residue polypeptide: Lysophospholipase (649 aa).

An N-terminal signal peptide occupies residues 1–21 (MNLKEWLLFSDAVFFAQGTLA). 17 N-linked (GlcNAc...) asparagine glycosylation sites follow: Asn-32, Asn-51, Asn-77, Asn-90, Asn-121, Asn-158, Asn-168, Asn-213, Asn-275, Asn-343, Asn-386, Asn-457, Asn-487, Asn-511, Asn-539, Asn-563, and Asn-580. A PLA2c domain is found at 34–584 (SCDEDINLIR…TNYCWNGTID (551 aa)).

Belongs to the lysophospholipase family.

It is found in the secreted. The catalysed reaction is a 1-acyl-sn-glycero-3-phosphocholine + H2O = sn-glycerol 3-phosphocholine + a fatty acid + H(+). Its function is as follows. Catalyzes the release of fatty acids from lysophospholipids. The polypeptide is Lysophospholipase (Torulaspora delbrueckii (Yeast)).